The sequence spans 309 residues: Carbamate kinase-like protein (309 aa).

Positions Asn125–Asn144 are disordered.

This sequence belongs to the carbamate kinase family.

The polypeptide is Carbamate kinase-like protein (Mycoplasma pneumoniae (strain ATCC 29342 / M129 / Subtype 1) (Mycoplasmoides pneumoniae)).